Reading from the N-terminus, the 750-residue chain is NAD(P)H-quinone oxidoreductase subunit 5, chloroplastic (750 aa).

The next 16 helical transmembrane spans lie at 9–29 (WIIP…LLLF), 40–60 (WAFT…NLSI), 89–109 (IDPL…MVLI), 125–145 (FAYM…SNLI), 147–167 (IYIF…FWFT), 185–205 (GDFG…SFEF), 230–250 (AALL…HIWL), 258–278 (TPIS…FLVA), 283–303 (LFIV…ITVL), 327–347 (LGYM…FHLI), 354–374 (ALLF…VGYS), 396–416 (TSFL…CFWS), 425–445 (WLYS…TAFY), 548–568 (LFPL…GIPF), 607–627 (IFSV…YKPI), and 724–744 (LFFY…FYLF).

The protein belongs to the complex I subunit 5 family. NDH is composed of at least 16 different subunits, 5 of which are encoded in the nucleus.

It localises to the plastid. It is found in the chloroplast thylakoid membrane. It catalyses the reaction a plastoquinone + NADH + (n+1) H(+)(in) = a plastoquinol + NAD(+) + n H(+)(out). The catalysed reaction is a plastoquinone + NADPH + (n+1) H(+)(in) = a plastoquinol + NADP(+) + n H(+)(out). Functionally, NDH shuttles electrons from NAD(P)H:plastoquinone, via FMN and iron-sulfur (Fe-S) centers, to quinones in the photosynthetic chain and possibly in a chloroplast respiratory chain. The immediate electron acceptor for the enzyme in this species is believed to be plastoquinone. Couples the redox reaction to proton translocation, and thus conserves the redox energy in a proton gradient. The protein is NAD(P)H-quinone oxidoreductase subunit 5, chloroplastic (ndhF) of Tecoma stans (Yellow bells).